Reading from the N-terminus, the 398-residue chain is DJ-1 protein homolog E (398 aa).

2 PfpI endopeptidase domains span residues 7 to 199 (KSAL…ESLG) and 210 to 393 (ASVL…TALG).

Belongs to the peptidase C56 family. In terms of assembly, homotrimer. Expressed in roots and cauline leaves.

In terms of biological role, may be involved in oxidative stress response. The protein is DJ-1 protein homolog E (DJ1E) of Arabidopsis thaliana (Mouse-ear cress).